Consider the following 102-residue polypeptide: MADFLKGLPVYNKSNFSRFHADSVCKASNRRPSVYLPTREYPSEQIIVTEKTNILLRYLHQQWDKKNAAKKRDQEQVEIEGENSAPPRKIARTDSQDMNEDT.

Residues 67 to 102 (NAAKKRDQEQVEIEGENSAPPRKIARTDSQDMNEDT) are disordered.

Belongs to the DDA1 family. As to quaternary structure, component of numerous DCX (DDB1-CUL4-X-box) E3 ubiquitin-protein ligase complexes which consist of a core of DDB1, cullin-4 (CUL4A or CUL4B), DDA1 and RBX1.

Its pathway is protein modification; protein ubiquitination. Its function is as follows. Functions as a component of numerous distinct DCX (DDB1-CUL4-X-box) E3 ubiquitin-protein ligase complexes which mediate the ubiquitination and subsequent proteasomal degradation of target proteins. In the DCX complexes, acts as a scaffolding subunit required to stabilize the complex. The chain is DET1- and DDB1-associated protein 1 from Gallus gallus (Chicken).